The sequence spans 491 residues: Feruloyl-CoA synthase (491 aa).

Threonine 154 lines the Mg(2+) pocket. The ATP site is built by alanine 199, glycine 291, and threonine 295. Glutamate 296 is a binding site for Mg(2+). The ATP site is built by aspartate 374 and lysine 391.

The protein belongs to the ATP-dependent AMP-binding enzyme family. It depends on Mg(2+) as a cofactor.

The enzyme catalyses (E)-ferulate + ATP + CoA = (E)-feruloyl-CoA + AMP + diphosphate. Functionally, catalyzes the formation of (E)-feruloyl-CoA, AMP and diphosphate from (E)-ferulate, CoA and ATP. Involved in the degradation pathway of lignin-derived aromatic compounds of plant cell walls. Catalyzes the first enzymatic step in the conversion of ferulic acid into high value compound vanillin. In Amycolatopsis sp, this protein is Feruloyl-CoA synthase.